The chain runs to 448 residues: 3-phosphoshikimate 1-carboxyvinyltransferase (448 aa).

3-phosphoshikimate contacts are provided by K38, S39, and R43. K38 serves as a coordination point for phosphoenolpyruvate. Residues G111 and R140 each coordinate phosphoenolpyruvate. 3-phosphoshikimate contacts are provided by S185, Q187, D335, and K362. Q187 is a binding site for phosphoenolpyruvate. Catalysis depends on D335, which acts as the Proton acceptor. 2 residues coordinate phosphoenolpyruvate: R366 and R408.

It belongs to the EPSP synthase family. Monomer.

The protein resides in the cytoplasm. The catalysed reaction is 3-phosphoshikimate + phosphoenolpyruvate = 5-O-(1-carboxyvinyl)-3-phosphoshikimate + phosphate. It functions in the pathway metabolic intermediate biosynthesis; chorismate biosynthesis; chorismate from D-erythrose 4-phosphate and phosphoenolpyruvate: step 6/7. Its function is as follows. Catalyzes the transfer of the enolpyruvyl moiety of phosphoenolpyruvate (PEP) to the 5-hydroxyl of shikimate-3-phosphate (S3P) to produce enolpyruvyl shikimate-3-phosphate and inorganic phosphate. The polypeptide is 3-phosphoshikimate 1-carboxyvinyltransferase (Synechococcus elongatus (strain ATCC 33912 / PCC 7942 / FACHB-805) (Anacystis nidulans R2)).